A 91-amino-acid polypeptide reads, in one-letter code: MSDSIVHVTDDSFEDEVLKSLEPVLVDYWADWCGPCKMIAPVLDEIAGEYAGRIKVAKLNIDENPNTPRRYGIRGIPTLMLSRQSEVEATK.

The 90-residue stretch at 2–91 (SDSIVHVTDD…SRQSEVEATK (90 aa)) folds into the Thioredoxin domain. Cysteines 33 and 36 form a disulfide.

The protein belongs to the thioredoxin family.

Its function is as follows. Participates in various redox reactions through the reversible oxidation of its active center dithiol to a disulfide and catalyzes dithiol-disulfide exchange reactions. The polypeptide is Thioredoxin (trxA) (Thiocapsa roseopersicina).